Here is a 273-residue protein sequence, read N- to C-terminus: 2,3,4,5-tetrahydropyridine-2,6-dicarboxylate N-succinyltransferase (273 aa).

The substrate site is built by arginine 106 and aspartate 143.

The protein belongs to the transferase hexapeptide repeat family. As to quaternary structure, homotrimer.

It localises to the cytoplasm. It catalyses the reaction (S)-2,3,4,5-tetrahydrodipicolinate + succinyl-CoA + H2O = (S)-2-succinylamino-6-oxoheptanedioate + CoA. Its pathway is amino-acid biosynthesis; L-lysine biosynthesis via DAP pathway; LL-2,6-diaminopimelate from (S)-tetrahydrodipicolinate (succinylase route): step 1/3. The sequence is that of 2,3,4,5-tetrahydropyridine-2,6-dicarboxylate N-succinyltransferase from Wolbachia sp. subsp. Brugia malayi (strain TRS).